The following is a 365-amino-acid chain: Outer membrane protein assembly factor BamC (365 aa).

The N-terminal stretch at 1–19 (MKHNRLAIAALAPVLILVG) is a signal peptide. Cys20 carries the N-palmitoyl cysteine lipid modification. A lipid anchor (S-diacylglycerol cysteine) is attached at Cys20.

It belongs to the BamC family. Part of the Bam complex.

The protein localises to the cell outer membrane. Part of the outer membrane protein assembly complex, which is involved in assembly and insertion of beta-barrel proteins into the outer membrane. This Ferrimonas balearica (strain DSM 9799 / CCM 4581 / KCTC 23876 / PAT) protein is Outer membrane protein assembly factor BamC.